The sequence spans 234 residues: Sugar fermentation stimulation protein homolog (234 aa).

The protein belongs to the SfsA family.

This Shewanella frigidimarina (strain NCIMB 400) protein is Sugar fermentation stimulation protein homolog.